Consider the following 837-residue polypeptide: Probable aldehyde oxidase 4 (837 aa).

One can recognise a 2Fe-2S ferredoxin-type domain in the interval Glu-9–Leu-98. [2Fe-2S] cluster is bound by residues Cys-50, Cys-55, Cys-58, and Cys-80. The region spanning Ile-240–Ser-427 is the FAD-binding PCMH-type domain.

Belongs to the xanthine dehydrogenase family. As to quaternary structure, aldehyde oxidases (AO) are homodimers and heterodimers of AO subunits. [2Fe-2S] cluster serves as cofactor. FAD is required as a cofactor. Requires Mo-molybdopterin as cofactor.

It catalyses the reaction an aldehyde + O2 + H2O = a carboxylate + H2O2 + H(+). The sequence is that of Probable aldehyde oxidase 4 from Oryza sativa subsp. japonica (Rice).